An 88-amino-acid polypeptide reads, in one-letter code: MSEVKVYRVKGEMLISHDRYPEWRKFEVYVRALKREHALEKVYSDLGSRHKLRRKHIRIRSVEEVDPGEVEDLNIIRLASLERFVKTG.

This sequence belongs to the eukaryotic ribosomal protein eL20 family. In terms of assembly, part of the 50S ribosomal subunit. Binds 23S rRNA.

This chain is Large ribosomal subunit protein eL20, found in Aeropyrum pernix (strain ATCC 700893 / DSM 11879 / JCM 9820 / NBRC 100138 / K1).